We begin with the raw amino-acid sequence, 127 residues long: Large ribosomal subunit protein bL21 (127 aa).

This sequence belongs to the bacterial ribosomal protein bL21 family. Part of the 50S ribosomal subunit. Contacts protein L20.

In terms of biological role, this protein binds to 23S rRNA in the presence of protein L20. This Blochmanniella floridana protein is Large ribosomal subunit protein bL21.